The following is a 971-amino-acid chain: Nitrogen regulatory protein areA (971 aa).

5 disordered regions span residues 39 to 61, 146 to 169, 262 to 307, 390 to 416, and 587 to 691; these read IHNAPTQRTXNSNRIPNSRDASA, HKEEQQQRQDEADARRKKNMDAGS, QPAH…VNST, SASMSNNNNNSDFYSPPASAYPSNVST, and DNNG…GNAP. Polar residues predominate over residues 42 to 59; the sequence is APTQRTXNSNRIPNSRDA. Residues 146 to 159 show a composition bias toward basic and acidic residues; that stretch reads HKEEQQQRQDEADA. Polar residues-rich tracts occupy residues 262-274 and 297-307; these read QPAHQATQGSEFN and FSPQVPAVNST. Residues 390-400 show a composition bias toward low complexity; the sequence is SASMSNNNNNS. 2 stretches are compositionally biased toward polar residues: residues 597–606 and 632–645; these read LERSQSQSFR and NGFEQLAQSMQSSP. 2 stretches are compositionally biased toward low complexity: residues 654–663 and 680–691; these read SGFSSVAPSR and AAAGNGNDGNAP. The segment at 694 to 718 adopts a GATA-type zinc-finger fold; that stretch reads CTNCFTQTTPLWRRNPEGQPLCNAC. The interval 742–918 is disordered; the sequence is NRGSGTNVPV…PFGSSAGLSS (177 aa). Residues 744-794 show a composition bias toward polar residues; sequence GSGTNVPVGGSSTRSKKTASTLNSRKNSTLSMSTATANSTKPNSSNPTPRV. Positions 796 to 826 are enriched in low complexity; it reads TPPATSQPPSSKDVDSPVSGTTSGANTAGST. Residues 832–845 are compositionally biased toward gly residues; sequence GGPGPSSGAVGGKG. Over residues 863–875 the composition is skewed to polar residues; the sequence is SSMSMQRPATASS. Positions 892–918 are enriched in low complexity; sequence SMDIDSPDSTSSIDGPRPFGSSAGLSS.

It localises to the nucleus. Functionally, major nitrogen regulatory protein. Positively acting regulatory gene of nitrogen metabolite repression. This Fusarium fujikuroi (Bakanae and foot rot disease fungus) protein is Nitrogen regulatory protein areA (AREA).